A 259-amino-acid chain; its full sequence is Snake venom serine protease homolog rhinocerase 2 (259 aa).

The N-terminal stretch at 1 to 17 (VLIRVLANLLLLQLSYA) is a signal peptide. Residues 18–23 (QESSEL) constitute a propeptide that is removed on maturation. In terms of domain architecture, Peptidase S1 spans 24–250 (VIGGDECDIN…YTDWIEGIIA (227 aa)). 6 disulfides stabilise this stretch: C30–C164, C51–C67, C99–C257, C143–C211, C175–C190, and C201–C226. N-linked (GlcNAc...) asparagine glycosylation occurs at N252.

It belongs to the peptidase S1 family. Snake venom subfamily. In terms of tissue distribution, expressed by the venom gland.

It localises to the secreted. Snake venom serine protease homolog that may act in the hemostasis system of the prey. This Bitis rhinoceros (West African gaboon viper) protein is Snake venom serine protease homolog rhinocerase 2.